A 366-amino-acid chain; its full sequence is Beta sliding clamp (366 aa).

The protein belongs to the beta sliding clamp family. As to quaternary structure, forms a ring-shaped head-to-tail homodimer around DNA which binds and tethers DNA polymerases and other proteins to the DNA. The DNA replisome complex has a single clamp-loading complex (3 tau and 1 each of delta, delta', psi and chi subunits) which binds 3 Pol III cores (1 core on the leading strand and 2 on the lagging strand) each with a beta sliding clamp dimer. Additional proteins in the replisome are other copies of gamma, psi and chi, Ssb, DNA helicase and RNA primase.

The protein localises to the cytoplasm. Confers DNA tethering and processivity to DNA polymerases and other proteins. Acts as a clamp, forming a ring around DNA (a reaction catalyzed by the clamp-loading complex) which diffuses in an ATP-independent manner freely and bidirectionally along dsDNA. Initially characterized for its ability to contact the catalytic subunit of DNA polymerase III (Pol III), a complex, multichain enzyme responsible for most of the replicative synthesis in bacteria; Pol III exhibits 3'-5' exonuclease proofreading activity. The beta chain is required for initiation of replication as well as for processivity of DNA replication. In Chlamydia muridarum (strain MoPn / Nigg), this protein is Beta sliding clamp (dnaN).